Here is a 156-residue protein sequence, read N- to C-terminus: Transcription antitermination protein NusB (156 aa).

Belongs to the NusB family.

In terms of biological role, involved in transcription antitermination. Required for transcription of ribosomal RNA (rRNA) genes. Binds specifically to the boxA antiterminator sequence of the ribosomal RNA (rrn) operons. This is Transcription antitermination protein NusB from Mycolicibacterium paratuberculosis (strain ATCC BAA-968 / K-10) (Mycobacterium paratuberculosis).